The primary structure comprises 301 residues: uncharacterized protein (301 aa).

Disordered stretches follow at residues 56–126 (ESPT…ESDL) and 149–173 (LSTE…DASS). A compositionally biased stretch (basic and acidic residues) spans 71–82 (VQKENQKPKDLN). Over residues 93 to 102 (KNSSGLVSQI) the composition is skewed to polar residues. The segment covering 161 to 173 (SNTSSSSMSDASS) has biased composition (low complexity).

This is an uncharacterized protein from Caenorhabditis elegans.